A 641-amino-acid polypeptide reads, in one-letter code: Mediator of RNA polymerase II transcription subunit 17 (641 aa).

Residues 159 to 186 (RLQSFNAAADKLLKSAARLETEVASETR) adopt a coiled-coil conformation.

This sequence belongs to the Mediator complex subunit 17 family. As to quaternary structure, component of the Mediator complex.

The protein localises to the nucleus. Its function is as follows. Component of the Mediator complex, a coactivator involved in the regulated transcription of nearly all RNA polymerase II-dependent genes. Mediator functions as a bridge to convey information from gene-specific regulatory proteins to the basal RNA polymerase II transcription machinery. Mediator is recruited to promoters by direct interactions with regulatory proteins and serves as a scaffold for the assembly of a functional preinitiation complex with RNA polymerase II and the general transcription factors. This Aspergillus clavatus (strain ATCC 1007 / CBS 513.65 / DSM 816 / NCTC 3887 / NRRL 1 / QM 1276 / 107) protein is Mediator of RNA polymerase II transcription subunit 17 (srb4).